Reading from the N-terminus, the 377-residue chain is Succinyl-diaminopimelate desuccinylase (377 aa).

Histidine 68 contacts Zn(2+). The active site involves aspartate 70. Aspartate 101 contributes to the Zn(2+) binding site. Glutamate 135 (proton acceptor) is an active-site residue. Residues glutamate 136, glutamate 164, and histidine 350 each coordinate Zn(2+).

The protein belongs to the peptidase M20A family. DapE subfamily. As to quaternary structure, homodimer. Zn(2+) is required as a cofactor. Co(2+) serves as cofactor.

It catalyses the reaction N-succinyl-(2S,6S)-2,6-diaminopimelate + H2O = (2S,6S)-2,6-diaminopimelate + succinate. It functions in the pathway amino-acid biosynthesis; L-lysine biosynthesis via DAP pathway; LL-2,6-diaminopimelate from (S)-tetrahydrodipicolinate (succinylase route): step 3/3. Its function is as follows. Catalyzes the hydrolysis of N-succinyl-L,L-diaminopimelic acid (SDAP), forming succinate and LL-2,6-diaminopimelate (DAP), an intermediate involved in the bacterial biosynthesis of lysine and meso-diaminopimelic acid, an essential component of bacterial cell walls. The chain is Succinyl-diaminopimelate desuccinylase from Acinetobacter baumannii (strain AB307-0294).